The primary structure comprises 344 residues: Lipase chaperone (344 aa).

A helical transmembrane segment spans residues 14-34 (VAVYGAVGLAAIAGVAIWSGA).

The protein belongs to the lipase chaperone family.

The protein resides in the cell inner membrane. Functionally, may be involved in the folding of the extracellular lipase during its passage through the periplasm. In Burkholderia ambifaria (strain MC40-6), this protein is Lipase chaperone.